The following is a 217-amino-acid chain: N-(5'-phosphoribosyl)anthranilate isomerase (217 aa).

Belongs to the TrpF family.

The catalysed reaction is N-(5-phospho-beta-D-ribosyl)anthranilate = 1-(2-carboxyphenylamino)-1-deoxy-D-ribulose 5-phosphate. Its pathway is amino-acid biosynthesis; L-tryptophan biosynthesis; L-tryptophan from chorismate: step 3/5. In Synechococcus sp. (strain ATCC 27144 / PCC 6301 / SAUG 1402/1) (Anacystis nidulans), this protein is N-(5'-phosphoribosyl)anthranilate isomerase.